Reading from the N-terminus, the 419-residue chain is UDP-N-acetylglucosamine 1-carboxyvinyltransferase 2 (419 aa).

22–23 (KN) provides a ligand contact to phosphoenolpyruvate. Residue R92 participates in UDP-N-acetyl-alpha-D-glucosamine binding. The active-site Proton donor is the C116. C116 is modified (2-(S-cysteinyl)pyruvic acid O-phosphothioketal). Residues 121 to 125 (RPIDL), D306, and V328 each bind UDP-N-acetyl-alpha-D-glucosamine.

It belongs to the EPSP synthase family. MurA subfamily.

Its subcellular location is the cytoplasm. The catalysed reaction is phosphoenolpyruvate + UDP-N-acetyl-alpha-D-glucosamine = UDP-N-acetyl-3-O-(1-carboxyvinyl)-alpha-D-glucosamine + phosphate. Its pathway is cell wall biogenesis; peptidoglycan biosynthesis. In terms of biological role, cell wall formation. Adds enolpyruvyl to UDP-N-acetylglucosamine. The polypeptide is UDP-N-acetylglucosamine 1-carboxyvinyltransferase 2 (Carboxydothermus hydrogenoformans (strain ATCC BAA-161 / DSM 6008 / Z-2901)).